The primary structure comprises 363 residues: Flagellar P-ring protein (363 aa).

The signal sequence occupies residues 1–20 (MKLKLILAVAMLAFSLPSQA).

The protein belongs to the FlgI family. In terms of assembly, the basal body constitutes a major portion of the flagellar organelle and consists of four rings (L,P,S, and M) mounted on a central rod.

The protein resides in the periplasm. Its subcellular location is the bacterial flagellum basal body. In terms of biological role, assembles around the rod to form the L-ring and probably protects the motor/basal body from shearing forces during rotation. The sequence is that of Flagellar P-ring protein from Shewanella sp. (strain MR-7).